The primary structure comprises 434 residues: Maltotriose-binding protein (434 aa).

The first 20 residues, 1 to 20 (MRRATYAFALLAILVLGVVA), serve as a signal peptide directing secretion. The segment at 28–52 (TTTPTQTSPATQPTTTQTPTQTETQ) is disordered. Low complexity predominate over residues 29 to 52 (TTPTQTSPATQPTTTQTPTQTETQ).

Belongs to the bacterial solute-binding protein 1 family.

In terms of biological role, involved in an abc transport system for maltotriose. Binds maltotriose much more tightly than maltose. The sequence is that of Maltotriose-binding protein (malE) from Pyrococcus furiosus (strain ATCC 43587 / DSM 3638 / JCM 8422 / Vc1).